We begin with the raw amino-acid sequence, 604 residues long: Testis-expressed protein 13C-1 (604 aa).

Disordered stretches follow at residues 314 to 337, 374 to 397, 485 to 523, and 538 to 580; these read EGEG…SHKD, PVMP…RPKI, CLNA…HPRK, and ATKQ…SANC. Positions 322 to 333 are enriched in polar residues; that stretch reads QGTSLHGDSSNN. A compositionally biased stretch (basic and acidic residues) spans 544–572; the sequence is KQPEGIKSLESKQPQETKSSESKQQEKPL.

It belongs to the TEX13 family.

In terms of biological role, plays a role in transcriptional repression. The chain is Testis-expressed protein 13C-1 from Mus musculus (Mouse).